A 76-amino-acid polypeptide reads, in one-letter code: DNA-directed RNA polymerase subunit epsilon (76 aa).

It belongs to the RNA polymerase subunit epsilon family. As to quaternary structure, RNAP is composed of a core of 2 alpha, a beta and a beta' subunit. The core is associated with a delta subunit, and at least one of epsilon or omega. When a sigma factor is associated with the core the holoenzyme is formed, which can initiate transcription.

It carries out the reaction RNA(n) + a ribonucleoside 5'-triphosphate = RNA(n+1) + diphosphate. In terms of biological role, a non-essential component of RNA polymerase (RNAP). The protein is DNA-directed RNA polymerase subunit epsilon of Streptococcus equi subsp. equi (strain 4047).